We begin with the raw amino-acid sequence, 290 residues long: Transmembrane protein 33 homolog (290 aa).

Disordered regions lie at residues 1–22 and 39–72; these read MSSPKFDSYDWENDPNWKEFTG and IDPNYKSSNNTTTQRPSTSSSSRTSSSSTSSPRA. Residues 45-72 show a composition bias toward low complexity; the sequence is SSNNTTTQRPSTSSSSRTSSSSTSSPRA. 4 consecutive transmembrane segments (helical) span residues 83 to 103, 109 to 129, 150 to 170, and 218 to 238; these read LYGAWVIAQISVILFTLFYFI, FFYKALLGATIAYSIPIFNTF, FVFYCMIFYFFGSSSLVYLLP, and IVLIAFFGIFSSFSNILLVFI.

The protein belongs to the PER33/POM33 family.

It localises to the membrane. This is Transmembrane protein 33 homolog (tmem33) from Dictyostelium discoideum (Social amoeba).